The primary structure comprises 330 residues: Biotin synthase (330 aa).

A Radical SAM core domain is found at 55–282 (NAVQRSTLLS…TAYVRLSAGR (228 aa)). 3 residues coordinate [4Fe-4S] cluster: Cys70, Cys74, and Cys77. [2Fe-2S] cluster contacts are provided by Cys114, Cys145, Cys205, and Arg277.

The protein belongs to the radical SAM superfamily. Biotin synthase family. As to quaternary structure, homodimer. [4Fe-4S] cluster serves as cofactor. The cofactor is [2Fe-2S] cluster.

It catalyses the reaction (4R,5S)-dethiobiotin + (sulfur carrier)-SH + 2 reduced [2Fe-2S]-[ferredoxin] + 2 S-adenosyl-L-methionine = (sulfur carrier)-H + biotin + 2 5'-deoxyadenosine + 2 L-methionine + 2 oxidized [2Fe-2S]-[ferredoxin]. It functions in the pathway cofactor biosynthesis; biotin biosynthesis; biotin from 7,8-diaminononanoate: step 2/2. In terms of biological role, catalyzes the conversion of dethiobiotin (DTB) to biotin by the insertion of a sulfur atom into dethiobiotin via a radical-based mechanism. This Methylibium petroleiphilum (strain ATCC BAA-1232 / LMG 22953 / PM1) protein is Biotin synthase.